A 339-amino-acid polypeptide reads, in one-letter code: Anthranilate phosphoribosyltransferase (339 aa).

5-phospho-alpha-D-ribose 1-diphosphate-binding positions include glycine 79, 82-83 (GD), serine 87, 89-92 (NIST), 107-115 (KHGNRSISS), and serine 119. Position 79 (glycine 79) interacts with anthranilate. Serine 91 contributes to the Mg(2+) binding site. Asparagine 110 contacts anthranilate. Arginine 165 contributes to the anthranilate binding site. Mg(2+) contacts are provided by aspartate 224 and glutamate 225.

Belongs to the anthranilate phosphoribosyltransferase family. As to quaternary structure, homodimer. Mg(2+) is required as a cofactor.

The enzyme catalyses N-(5-phospho-beta-D-ribosyl)anthranilate + diphosphate = 5-phospho-alpha-D-ribose 1-diphosphate + anthranilate. Its pathway is amino-acid biosynthesis; L-tryptophan biosynthesis; L-tryptophan from chorismate: step 2/5. Its function is as follows. Catalyzes the transfer of the phosphoribosyl group of 5-phosphorylribose-1-pyrophosphate (PRPP) to anthranilate to yield N-(5'-phosphoribosyl)-anthranilate (PRA). This chain is Anthranilate phosphoribosyltransferase, found in Listeria welshimeri serovar 6b (strain ATCC 35897 / DSM 20650 / CCUG 15529 / CIP 8149 / NCTC 11857 / SLCC 5334 / V8).